Here is a 141-residue protein sequence, read N- to C-terminus: Large ribosomal subunit protein uL11 (141 aa).

Belongs to the universal ribosomal protein uL11 family. Part of the ribosomal stalk of the 50S ribosomal subunit. Interacts with L10 and the large rRNA to form the base of the stalk. L10 forms an elongated spine to which L12 dimers bind in a sequential fashion forming a multimeric L10(L12)X complex. In terms of processing, one or more lysine residues are methylated.

In terms of biological role, forms part of the ribosomal stalk which helps the ribosome interact with GTP-bound translation factors. This is Large ribosomal subunit protein uL11 from Trichlorobacter lovleyi (strain ATCC BAA-1151 / DSM 17278 / SZ) (Geobacter lovleyi).